The sequence spans 130 residues: Small ribosomal subunit protein uS9 (130 aa).

This sequence belongs to the universal ribosomal protein uS9 family.

In Bacillus cytotoxicus (strain DSM 22905 / CIP 110041 / 391-98 / NVH 391-98), this protein is Small ribosomal subunit protein uS9.